A 325-amino-acid chain; its full sequence is GMP reductase (325 aa).

The Thioimidate intermediate role is filled by Cys174. 203–226 (IIADGGIRTHGDIAKSIRFGATMV) serves as a coordination point for NADP(+).

The protein belongs to the IMPDH/GMPR family. GuaC type 2 subfamily.

The catalysed reaction is IMP + NH4(+) + NADP(+) = GMP + NADPH + 2 H(+). Catalyzes the irreversible NADPH-dependent deamination of GMP to IMP. It functions in the conversion of nucleobase, nucleoside and nucleotide derivatives of G to A nucleotides, and in maintaining the intracellular balance of A and G nucleotides. In Helicobacter pylori (strain J99 / ATCC 700824) (Campylobacter pylori J99), this protein is GMP reductase.